We begin with the raw amino-acid sequence, 304 residues long: Acetylxylan esterase A (304 aa).

The signal sequence occupies residues 1 to 19; that stretch reads MVKLQYLLSILLYAYSCTA. Catalysis depends on Ser-147, which acts as the Charge relay system. N-linked (GlcNAc...) asparagine glycosylation is present at Asn-189.

The protein belongs to the carbohydrate esterase 1 (CE1) family. AxeA subfamily. In terms of assembly, monomer.

It is found in the secreted. It carries out the reaction Deacetylation of xylans and xylo-oligosaccharides.. It functions in the pathway glycan degradation; xylan degradation. In terms of biological role, acetylxylan esterase involved in the hydrolysis of xylan, a major structural heterogeneous polysaccharide found in plant biomass representing the second most abundant polysaccharide in the biosphere, after cellulose. Degrades acetylated xylans by cleaving acetyl side groups from the hetero-xylan backbone. This chain is Acetylxylan esterase A (axeA), found in Emericella nidulans (strain FGSC A4 / ATCC 38163 / CBS 112.46 / NRRL 194 / M139) (Aspergillus nidulans).